Consider the following 103-residue polypeptide: Large ribosomal subunit protein uL23 (103 aa).

The protein belongs to the universal ribosomal protein uL23 family. Part of the 50S ribosomal subunit. Contacts protein L29, and trigger factor when it is bound to the ribosome.

In terms of biological role, one of the early assembly proteins it binds 23S rRNA. One of the proteins that surrounds the polypeptide exit tunnel on the outside of the ribosome. Forms the main docking site for trigger factor binding to the ribosome. This Chlorobium phaeobacteroides (strain DSM 266 / SMG 266 / 2430) protein is Large ribosomal subunit protein uL23.